Reading from the N-terminus, the 251-residue chain is Flap endonuclease Xni (251 aa).

D104 is a Mg(2+) binding site. Residues 160–248 (VSPQQLSDYW…ALTGNLQQLR (89 aa)) form the 5'-3' exonuclease domain. 5 residues coordinate K(+): L171, A172, P180, V182, and I185. An interaction with DNA region spans residues 184 to 189 (GIGPKT).

The protein belongs to the Xni family. It depends on Mg(2+) as a cofactor. K(+) is required as a cofactor.

Has flap endonuclease activity. During DNA replication, flap endonucleases cleave the 5'-overhanging flap structure that is generated by displacement synthesis when DNA polymerase encounters the 5'-end of a downstream Okazaki fragment. This Serratia proteamaculans (strain 568) protein is Flap endonuclease Xni.